The sequence spans 365 residues: tRNA(Met) cytidine acetate ligase (365 aa).

Residues Ile-7–Leu-20, Gly-96, Asn-152, and Arg-175 each bind ATP.

The protein belongs to the TmcAL family.

It is found in the cytoplasm. The catalysed reaction is cytidine(34) in elongator tRNA(Met) + acetate + ATP = N(4)-acetylcytidine(34) in elongator tRNA(Met) + AMP + diphosphate. Catalyzes the formation of N(4)-acetylcytidine (ac(4)C) at the wobble position of elongator tRNA(Met), using acetate and ATP as substrates. First activates an acetate ion to form acetyladenylate (Ac-AMP) and then transfers the acetyl group to tRNA to form ac(4)C34. This chain is tRNA(Met) cytidine acetate ligase, found in Streptococcus pneumoniae (strain JJA).